Consider the following 1059-residue polypeptide: DNA (cytosine-5)-methyltransferase CMT1 (1059 aa).

Disordered regions lie at residues Met-1 to Ala-196 and Cys-230 to Arg-272. Positions Ala-29–Asp-41 are enriched in acidic residues. Composition is skewed to basic and acidic residues over residues Arg-42–Ala-79, Arg-92–Ala-129, and Ser-147–Lys-157. Over residues Val-158–Ala-167 the composition is skewed to basic residues. Over residues Arg-252–Val-262 the composition is skewed to basic and acidic residues. The 125-residue stretch at Glu-312–Pro-436 folds into the BAH domain. An SAM-dependent MTase C5-type domain is found at Ala-479–Glu-1017. The region spanning Phe-584–Leu-649 is the Chromo domain. Cys-662 is a catalytic residue.

It belongs to the class I-like SAM-binding methyltransferase superfamily. C5-methyltransferase family.

It is found in the nucleus. It carries out the reaction a 2'-deoxycytidine in DNA + S-adenosyl-L-methionine = a 5-methyl-2'-deoxycytidine in DNA + S-adenosyl-L-homocysteine + H(+). Involved in CpXpG DNA methylation. May not play a major role in maintaining CpXpG methylation. The chain is DNA (cytosine-5)-methyltransferase CMT1 from Oryza sativa subsp. japonica (Rice).